Here is a 122-residue protein sequence, read N- to C-terminus: Large ribosomal subunit protein uL14 (122 aa).

This sequence belongs to the universal ribosomal protein uL14 family. In terms of assembly, part of the 50S ribosomal subunit. Forms a cluster with proteins L3 and L19. In the 70S ribosome, L14 and L19 interact and together make contacts with the 16S rRNA in bridges B5 and B8.

Binds to 23S rRNA. Forms part of two intersubunit bridges in the 70S ribosome. The protein is Large ribosomal subunit protein uL14 of Salinibacter ruber (strain DSM 13855 / M31).